Reading from the N-terminus, the 213-residue chain is Thymidylate kinase (213 aa).

Position 9 to 16 (9 to 16) interacts with ATP; the sequence is GIEGCGKT.

Belongs to the thymidylate kinase family.

The enzyme catalyses dTMP + ATP = dTDP + ADP. In terms of biological role, phosphorylation of dTMP to form dTDP in both de novo and salvage pathways of dTTP synthesis. The polypeptide is Thymidylate kinase (Geobacter sulfurreducens (strain ATCC 51573 / DSM 12127 / PCA)).